Consider the following 119-residue polypeptide: Ribonuclease P protein component (119 aa).

This sequence belongs to the RnpA family. Consists of a catalytic RNA component (M1 or rnpB) and a protein subunit.

The enzyme catalyses Endonucleolytic cleavage of RNA, removing 5'-extranucleotides from tRNA precursor.. Functionally, RNaseP catalyzes the removal of the 5'-leader sequence from pre-tRNA to produce the mature 5'-terminus. It can also cleave other RNA substrates such as 4.5S RNA. The protein component plays an auxiliary but essential role in vivo by binding to the 5'-leader sequence and broadening the substrate specificity of the ribozyme. The polypeptide is Ribonuclease P protein component (Escherichia coli O157:H7).